Reading from the N-terminus, the 280-residue chain is Large ribosomal subunit protein uL2 (280 aa).

Disordered stretches follow at residues 1 to 58 and 226 to 280; these read MAIR…GGGH and MNPV…KHGR. Composition is skewed to basic residues over residues 37–58 and 268–280; these read LHGH…GGGH and IVRR…KHGR.

This sequence belongs to the universal ribosomal protein uL2 family. As to quaternary structure, part of the 50S ribosomal subunit. Forms a bridge to the 30S subunit in the 70S ribosome.

Its function is as follows. One of the primary rRNA binding proteins. Required for association of the 30S and 50S subunits to form the 70S ribosome, for tRNA binding and peptide bond formation. It has been suggested to have peptidyltransferase activity; this is somewhat controversial. Makes several contacts with the 16S rRNA in the 70S ribosome. This is Large ribosomal subunit protein uL2 from Mycolicibacterium paratuberculosis (strain ATCC BAA-968 / K-10) (Mycobacterium paratuberculosis).